Here is a 397-residue protein sequence, read N- to C-terminus: Elongation factor Tu 1 (397 aa).

The 197-residue stretch at Lys-10–Val-206 folds into the tr-type G domain. The tract at residues Gly-19 to Thr-26 is G1. Gly-19–Thr-26 contacts GTP. Thr-26 is a binding site for Mg(2+). The G2 stretch occupies residues Gly-61–Ser-65. A G3 region spans residues Asp-82 to Gly-85. GTP-binding positions include Asp-82–His-86 and Asn-137–Asp-140. The G4 stretch occupies residues Asn-137 to Asp-140. Residues Ser-175–Leu-177 are G5.

It belongs to the TRAFAC class translation factor GTPase superfamily. Classic translation factor GTPase family. EF-Tu/EF-1A subfamily. In terms of assembly, monomer.

Its subcellular location is the cytoplasm. The enzyme catalyses GTP + H2O = GDP + phosphate + H(+). In terms of biological role, GTP hydrolase that promotes the GTP-dependent binding of aminoacyl-tRNA to the A-site of ribosomes during protein biosynthesis. In Alkaliphilus metalliredigens (strain QYMF), this protein is Elongation factor Tu 1.